Consider the following 864-residue polypeptide: Alanine--tRNA ligase (864 aa).

Positions 534, 538, 639, and 643 each coordinate Zn(2+).

Belongs to the class-II aminoacyl-tRNA synthetase family. Zn(2+) is required as a cofactor.

The protein localises to the cytoplasm. The enzyme catalyses tRNA(Ala) + L-alanine + ATP = L-alanyl-tRNA(Ala) + AMP + diphosphate. Catalyzes the attachment of alanine to tRNA(Ala) in a two-step reaction: alanine is first activated by ATP to form Ala-AMP and then transferred to the acceptor end of tRNA(Ala). Also edits incorrectly charged Ser-tRNA(Ala) and Gly-tRNA(Ala) via its editing domain. The sequence is that of Alanine--tRNA ligase from Onion yellows phytoplasma (strain OY-M).